An 804-amino-acid polypeptide reads, in one-letter code: Cell surface sensor MSB2 (804 aa).

An N-terminal signal peptide occupies residues 1 to 20 (MHNFSKLAVAFVAAASFASA). At 21–694 (EPETKAKVER…TNQSATQRGT (674 aa)) the chain is on the extracellular side. Asn-45 carries N-linked (GlcNAc...) asparagine glycosylation. Composition is skewed to low complexity over residues 46-58 (TTTP…SSTS) and 69-80 (SSFSSSASSSSA). Disordered regions lie at residues 46-90 (TTTP…RQPT) and 105-220 (TDST…ATSN). Residues 46 to 475 (TTTPASEASS…SVAPTSATSS (430 aa)) are serine/threonine rich region (STR). Polar residues-rich tracts occupy residues 81–90 (QELTASRQPT) and 109–126 (PFSQ…SATG). Composition is skewed to low complexity over residues 128–143 (VTPI…PSTA) and 150–169 (SALT…SVTS). Asn-157 is a glycosylation site (N-linked (GlcNAc...) asparagine). Positions 170–188 (PGSTSGPAGTPESSSASDF) are enriched in polar residues. Residues 189-202 (TSAVATSRASTATS) show a composition bias toward low complexity. N-linked (GlcNAc...) asparagine glycans are attached at residues Asn-298, Asn-308, Asn-357, and Asn-393. Residues 345–394 (VQTLPPVSTPTANGTVTSPPVDSQTTVLPTTTPGLSSDTIVTSPGVTANS) are compositionally biased toward polar residues. A disordered region spans residues 345–516 (VQTLPPVSTP…APTVLPSDLP (172 aa)). 2 stretches are compositionally biased toward low complexity: residues 395-407 (TQVP…TIPT) and 427-476 (NNTV…TSSA). Residues Asn-427 and Asn-433 are each glycosylated (N-linked (GlcNAc...) asparagine). The tract at residues 482 to 641 (WLPTTIIVQA…NGMLAHNLTM (160 aa)) is HKR11-MSB2 homology domain (HMH). Residues 493-508 (LPSTTGSSTNAPSSAP) show a composition bias toward polar residues. 5 N-linked (GlcNAc...) asparagine glycosylation sites follow: Asn-629, Asn-638, Asn-669, Asn-683, and Asn-686. The tract at residues 658 to 689 (KPAGAGSGTGGNGSNGPNDVFNNDNNSTNQSA) is disordered. The span at 660 to 671 (AGAGSGTGGNGS) shows a compositional bias: gly residues. The segment covering 672–686 (NGPNDVFNNDNNSTN) has biased composition (low complexity). A helical transmembrane segment spans residues 695-715 (VAGIAFGAVSLAAAYGAAMFI). At 716 to 804 (VARRYKKKRQ…VAQENSLGWN (89 aa)) the chain is on the cytoplasmic side. Disordered stretches follow at residues 724–748 (RQAH…PALM) and 762–804 (GVMG…LGWN). Positions 731 to 744 (SSVATPSEMRQSGS) are enriched in polar residues. The segment covering 774-787 (GSNGSGRSAGNSAR) has biased composition (low complexity).

It belongs to the HKR1/MSB2 family.

It localises to the cell membrane. The protein localises to the vacuole membrane. MSB2 and SHO1 have overlapping functions in recognizing various surface signals for MAPK PMK1 activation and appressorium formation. While MSB2 is critical for sensing surface hydrophobicity and cutin monomers, SHO1 may play a more important role in recognizing rice leaf waxes. The protein is Cell surface sensor MSB2 of Pyricularia oryzae (strain 70-15 / ATCC MYA-4617 / FGSC 8958) (Rice blast fungus).